Reading from the N-terminus, the 87-residue chain is MIQENKKTIIDTFKTHENDTGSPEVQIALLTERINHLNEHLKSHKKDFHSRRGLLKMVGKRRNLLNYLKDRDIERYREIIAKLGLRK.

The protein belongs to the universal ribosomal protein uS15 family. Part of the 30S ribosomal subunit. Forms a bridge to the 50S subunit in the 70S ribosome, contacting the 23S rRNA.

Its function is as follows. One of the primary rRNA binding proteins, it binds directly to 16S rRNA where it helps nucleate assembly of the platform of the 30S subunit by binding and bridging several RNA helices of the 16S rRNA. Forms an intersubunit bridge (bridge B4) with the 23S rRNA of the 50S subunit in the ribosome. This Alkaliphilus oremlandii (strain OhILAs) (Clostridium oremlandii (strain OhILAs)) protein is Small ribosomal subunit protein uS15.